A 172-amino-acid polypeptide reads, in one-letter code: R-phycocyanin beta chain (172 aa).

Residues asparagine 35 and aspartate 39 each coordinate (2R,3E)-phycoerythrobilin. (2R,3E)-phycocyanobilin is bound by residues asparagine 72, cysteine 82, and 84-85 (RD). N4-methylasparagine is present on asparagine 72. (2R,3E)-phycoerythrobilin contacts are provided by residues 149–151 (PAG) and cysteine 153.

Belongs to the phycobiliprotein family. Heterododecamer of 6 alpha and 6 beta chains. The basic functional unit of phycobiliproteins is a ring-shaped hexamer formed from two back-to-back trimers contacting via the alpha chain subunits. The trimers are composed of alpha/beta subunit heterodimers arranged around a three-fold axis of symmetry. The phycoerythrins also contain a gamma subunit which is located in the center of the hexamer. In terms of processing, contains one covalently linked phycocyanobilin chromophore and one covalently linked phycoerythrobilin chromophore.

The protein localises to the plastid. Its subcellular location is the chloroplast thylakoid membrane. Functionally, light-harvesting photosynthetic tetrapyrrole chromophore-protein from the phycobiliprotein complex (phycobilisome, PBS). Phycocyanin is the major phycobiliprotein in the PBS rod. The polypeptide is R-phycocyanin beta chain (rpcB) (Polysiphonia urceolata (Red alga)).